Here is a 209-residue protein sequence, read N- to C-terminus: Rac-like GTP-binding protein ARAC7 (209 aa).

13–20 (GDGAVGKT) contributes to the GTP binding site. The Effector region signature appears at 35 to 43 (YIPTVFDNF). Residues 60–64 (DTAGQ) and 118–121 (TKLD) each bind GTP. 3 S-palmitoyl cysteine lipidation sites follow: C196, C203, and C206.

Belongs to the small GTPase superfamily. Rho family. Post-translationally, although this sequence has a C-terminal -CXXX, it is palmitoylated at Cys-206, rather than prenylated.

It is found in the membrane. In terms of biological role, acts as a negative regulator of abscisic acid (ABA) responses. This is Rac-like GTP-binding protein ARAC7 (ARAC7) from Arabidopsis thaliana (Mouse-ear cress).